Reading from the N-terminus, the 120-residue chain is Large ribosomal subunit protein bL19 (120 aa).

Belongs to the bacterial ribosomal protein bL19 family.

Its function is as follows. This protein is located at the 30S-50S ribosomal subunit interface and may play a role in the structure and function of the aminoacyl-tRNA binding site. The polypeptide is Large ribosomal subunit protein bL19 (rplS) (Nostoc sp. (strain PCC 7120 / SAG 25.82 / UTEX 2576)).